The following is a 126-amino-acid chain: Glycine cleavage system H protein (126 aa).

One can recognise a Lipoyl-binding domain in the interval 23–104 (TLTVGITDHA…PYESWLFKIK (82 aa)). Residue Lys64 is modified to N6-lipoyllysine.

It belongs to the GcvH family. In terms of assembly, the glycine cleavage system is composed of four proteins: P, T, L and H. Requires (R)-lipoate as cofactor.

Functionally, the glycine cleavage system catalyzes the degradation of glycine. The H protein shuttles the methylamine group of glycine from the P protein to the T protein. This Paraburkholderia phytofirmans (strain DSM 17436 / LMG 22146 / PsJN) (Burkholderia phytofirmans) protein is Glycine cleavage system H protein.